A 181-amino-acid polypeptide reads, in one-letter code: RNA pyrophosphohydrolase (181 aa).

Residues 6-149 (GFRPNVGIIL…KRRVYTRALQ (144 aa)) enclose the Nudix hydrolase domain. The Nudix box motif lies at 38-59 (GGIKAQETPEEALFRELEEEVG). Residues 159–181 (GLPRQPPVGRPRRSAPPRGCRRA) form a disordered region. Over residues 168-181 (RPRRSAPPRGCRRA) the composition is skewed to basic residues.

The protein belongs to the Nudix hydrolase family. RppH subfamily. The cofactor is a divalent metal cation.

Accelerates the degradation of transcripts by removing pyrophosphate from the 5'-end of triphosphorylated RNA, leading to a more labile monophosphorylated state that can stimulate subsequent ribonuclease cleavage. This Alkalilimnicola ehrlichii (strain ATCC BAA-1101 / DSM 17681 / MLHE-1) protein is RNA pyrophosphohydrolase.